Here is a 287-residue protein sequence, read N- to C-terminus: ATP synthase gamma chain (287 aa).

The protein belongs to the ATPase gamma chain family. F-type ATPases have 2 components, CF(1) - the catalytic core - and CF(0) - the membrane proton channel. CF(1) has five subunits: alpha(3), beta(3), gamma(1), delta(1), epsilon(1). CF(0) has three main subunits: a, b and c.

Its subcellular location is the cell inner membrane. Functionally, produces ATP from ADP in the presence of a proton gradient across the membrane. The gamma chain is believed to be important in regulating ATPase activity and the flow of protons through the CF(0) complex. This chain is ATP synthase gamma chain, found in Geotalea daltonii (strain DSM 22248 / JCM 15807 / FRC-32) (Geobacter daltonii).